Here is a 144-residue protein sequence, read N- to C-terminus: Acylphosphatase-like protein MJ1331 (144 aa).

One can recognise an Acylphosphatase-like domain in the interval 8–100; it reads TYELRIYGNV…FPNGLNKIST (93 aa).

This Methanocaldococcus jannaschii (strain ATCC 43067 / DSM 2661 / JAL-1 / JCM 10045 / NBRC 100440) (Methanococcus jannaschii) protein is Acylphosphatase-like protein MJ1331.